We begin with the raw amino-acid sequence, 401 residues long: Formate-dependent phosphoribosylglycinamide formyltransferase (401 aa).

Residues 22–23 and glutamate 82 contribute to the N(1)-(5-phospho-beta-D-ribosyl)glycinamide site; that span reads EL. ATP-binding positions include arginine 115, lysine 157, 162 to 167, 197 to 200, and glutamate 205; these read SSGKGQ and EGFI. The region spanning 120-315 is the ATP-grasp domain; it reads RLAAETLGLP…EFELHARAIL (196 aa). The Mg(2+) site is built by glutamate 274 and glutamate 286. N(1)-(5-phospho-beta-D-ribosyl)glycinamide contacts are provided by residues aspartate 293, lysine 362, and 369 to 370; that span reads RR.

This sequence belongs to the PurK/PurT family. In terms of assembly, homodimer.

It carries out the reaction N(1)-(5-phospho-beta-D-ribosyl)glycinamide + formate + ATP = N(2)-formyl-N(1)-(5-phospho-beta-D-ribosyl)glycinamide + ADP + phosphate + H(+). Its pathway is purine metabolism; IMP biosynthesis via de novo pathway; N(2)-formyl-N(1)-(5-phospho-D-ribosyl)glycinamide from N(1)-(5-phospho-D-ribosyl)glycinamide (formate route): step 1/1. Involved in the de novo purine biosynthesis. Catalyzes the transfer of formate to 5-phospho-ribosyl-glycinamide (GAR), producing 5-phospho-ribosyl-N-formylglycinamide (FGAR). Formate is provided by PurU via hydrolysis of 10-formyl-tetrahydrofolate. The polypeptide is Formate-dependent phosphoribosylglycinamide formyltransferase (Cupriavidus pinatubonensis (strain JMP 134 / LMG 1197) (Cupriavidus necator (strain JMP 134))).